We begin with the raw amino-acid sequence, 50 residues long: uncharacterized protein (50 aa).

Residues 10–29 (LFFYYPFFIIFLYIYLVFFI) traverse the membrane as a helical segment.

The protein resides in the plastid. It is found in the chloroplast membrane. This is an uncharacterized protein from Marchantia polymorpha (Common liverwort).